The chain runs to 70 residues: ATP synthase subunit c (70 aa).

2 helical membrane-spanning segments follow: residues 4–24 (IAAG…NGLV) and 47–67 (FLGV…AFLV).

The protein belongs to the ATPase C chain family. F-type ATPases have 2 components, F(1) - the catalytic core - and F(0) - the membrane proton channel. F(1) has five subunits: alpha(3), beta(3), gamma(1), delta(1), epsilon(1). F(0) has three main subunits: a(1), b(2) and c(10-14). The alpha and beta chains form an alternating ring which encloses part of the gamma chain. F(1) is attached to F(0) by a central stalk formed by the gamma and epsilon chains, while a peripheral stalk is formed by the delta and b chains.

Its subcellular location is the cell membrane. Functionally, f(1)F(0) ATP synthase produces ATP from ADP in the presence of a proton or sodium gradient. F-type ATPases consist of two structural domains, F(1) containing the extramembraneous catalytic core and F(0) containing the membrane proton channel, linked together by a central stalk and a peripheral stalk. During catalysis, ATP synthesis in the catalytic domain of F(1) is coupled via a rotary mechanism of the central stalk subunits to proton translocation. Its function is as follows. Key component of the F(0) channel; it plays a direct role in translocation across the membrane. A homomeric c-ring of between 10-14 subunits forms the central stalk rotor element with the F(1) delta and epsilon subunits. This is ATP synthase subunit c from Limosilactobacillus fermentum (strain NBRC 3956 / LMG 18251) (Lactobacillus fermentum).